Consider the following 394-residue polypeptide: Chorismate synthase (394 aa).

The NADP(+) site is built by R42 and R48. Residues 137–139 (RAS), 258–259 (QA), G302, 317–321 (KPIAT), and R343 each bind FMN.

This sequence belongs to the chorismate synthase family. In terms of assembly, homotetramer. Requires FMNH2 as cofactor.

It catalyses the reaction 5-O-(1-carboxyvinyl)-3-phosphoshikimate = chorismate + phosphate. Its pathway is metabolic intermediate biosynthesis; chorismate biosynthesis; chorismate from D-erythrose 4-phosphate and phosphoenolpyruvate: step 7/7. In terms of biological role, catalyzes the anti-1,4-elimination of the C-3 phosphate and the C-6 proR hydrogen from 5-enolpyruvylshikimate-3-phosphate (EPSP) to yield chorismate, which is the branch point compound that serves as the starting substrate for the three terminal pathways of aromatic amino acid biosynthesis. This reaction introduces a second double bond into the aromatic ring system. This chain is Chorismate synthase, found in Streptomyces avermitilis (strain ATCC 31267 / DSM 46492 / JCM 5070 / NBRC 14893 / NCIMB 12804 / NRRL 8165 / MA-4680).